The chain runs to 1143 residues: ATP-dependent helicase/deoxyribonuclease subunit B (1143 aa).

The 274-residue stretch at 1–274 (MNYMHLGRAG…YGQTVKFQST (274 aa)) folds into the UvrD-like helicase ATP-binding domain. 7 to 14 (GRAGTGKT) is a binding site for ATP. In terms of domain architecture, UvrD-like helicase C-terminal spans 267 to 565 (QTVKFQSTGL…RFSLVPPSLD (299 aa)). [4Fe-4S] cluster-binding residues include cysteine 782, cysteine 1104, cysteine 1107, and cysteine 1113.

Belongs to the helicase family. AddB/RexB type 1 subfamily. Heterodimer of AddA and AddB. It depends on Mg(2+) as a cofactor. The cofactor is [4Fe-4S] cluster.

In terms of biological role, the heterodimer acts as both an ATP-dependent DNA helicase and an ATP-dependent, dual-direction single-stranded exonuclease. Recognizes the chi site generating a DNA molecule suitable for the initiation of homologous recombination. The AddB subunit has 5' -&gt; 3' nuclease activity but not helicase activity. The chain is ATP-dependent helicase/deoxyribonuclease subunit B from Exiguobacterium sibiricum (strain DSM 17290 / CCUG 55495 / CIP 109462 / JCM 13490 / 255-15).